The primary structure comprises 494 residues: GPI alpha-1,6-mannosyltransferase 2 (494 aa).

The Cytoplasmic portion of the chain corresponds to 1–13 (MWSLDPSQKEVLR). Residues 14 to 34 (FAVSCRILTLMLQALFNIIIP) form a helical membrane-spanning segment. At 35-77 (DHHADAFSPPRLASSCSVDQLVEGLLGGLSRWDAEHFLFIAEH) the chain is on the lumenal side. Residues 78–98 (GYLYEHNFAFFPGFPLALLMG) form a helical membrane-spanning segment. Residues 99–113 (TELLRPLQGLLSQRS) lie on the Cytoplasmic side of the membrane. Residues 114-134 (CLLVSVALLNFLFSVLAAVTL) form a helical membrane-spanning segment. Over 135–136 (HD) the chain is Lumenal. Residues 137–157 (LGCLVLGCPRQAFYAAMLFCL) form a helical membrane-spanning segment. Residues 158-161 (SPAN) are Cytoplasmic-facing. A helical transmembrane segment spans residues 162 to 182 (VFLAAGYSEALFAFLTFSAMG). Residues 183-192 (QLERGRSWAS) are Lumenal-facing. The chain crosses the membrane as a helical span at residues 193-213 (GLLFALATGVRSNGLVSVGFL). The Cytoplasmic segment spans residues 214–234 (LHAQCRGFFSSLVVLNPLKPL). The helical transmembrane segment at 235–255 (FKLMASLCLSVLTVSLPFALF) threads the bilayer. Over 256–327 (QYYAYTQFCL…RYYELRQVPN (72 aa)) the chain is Lumenal. The chain crosses the membrane as a helical span at residues 328–348 (FLLATPVAVLVVWAAWTYVTT). The Cytoplasmic segment spans residues 349-379 (HPWLCLTLGLRRSKDSKKTLEKPHPGFLSPK). A helical transmembrane segment spans residues 380–400 (VFVYLVHAAGLLLFGSLCMHV). The Lumenal portion of the chain corresponds to 401-470 (QVLTRLLCSS…NWRACSPVTR (70 aa)). The helical transmembrane segment at 471 to 491 (CILGYFLTYWLLGLLLHCNFL) threads the bilayer. The Cytoplasmic segment spans residues 492–494 (PWT).

It belongs to the PIGV family. Not N-glycosylated.

Its subcellular location is the endoplasmic reticulum membrane. Its pathway is glycolipid biosynthesis; glycosylphosphatidylinositol-anchor biosynthesis. Functionally, alpha-1,6-mannosyltransferase that catalyzes the transfer of the second mannose, via an alpha-1,6 bond, from a dolichol-phosphate-mannose (Dol-P-Man) to the alpha-D-Man-(1-&gt;4)-alpha-D-GlcN-(1-&gt;6)-(1-radyl,2-acyl-sn-glycero-3-phospho)-2-acyl-inositol intermediate to generate an alpha-D-Man-(1-&gt;6)-alpha-D-Man-(1-&gt;4)-alpha-D-GlcN-(1-&gt;6)-(1-radyl,2-acyl-sn-glycero-3-phospho)-2-acyl-inositol and participates in the seventh step of the glycosylphosphatidylinositol-anchor biosynthesis. Also transfers the second mannose on a 2-PEtn-alpha-D-Man-(1-&gt;4)-alpha-D-GlcN-(1-&gt;6)-(1-radyl,2-acyl-sn-glycero-3-phospho)-2-acyl-inositol. This is GPI alpha-1,6-mannosyltransferase 2 from Cricetulus griseus (Chinese hamster).